Consider the following 159-residue polypeptide: Ribosomal RNA large subunit methyltransferase H (159 aa).

S-adenosyl-L-methionine is bound by residues L76 and G108.

The protein belongs to the RNA methyltransferase RlmH family. As to quaternary structure, homodimer.

Its subcellular location is the cytoplasm. The catalysed reaction is pseudouridine(1915) in 23S rRNA + S-adenosyl-L-methionine = N(3)-methylpseudouridine(1915) in 23S rRNA + S-adenosyl-L-homocysteine + H(+). Specifically methylates the pseudouridine at position 1915 (m3Psi1915) in 23S rRNA. The chain is Ribosomal RNA large subunit methyltransferase H from Limosilactobacillus fermentum (strain NBRC 3956 / LMG 18251) (Lactobacillus fermentum).